The sequence spans 117 residues: uncharacterized protein (117 aa).

This is an uncharacterized protein from Pasteurella multocida (strain Pm70).